Here is a 174-residue protein sequence, read N- to C-terminus: Disulfide bond formation protein B (174 aa).

Residues Met-1–Ser-14 are Cytoplasmic-facing. Residues Trp-15–Tyr-31 traverse the membrane as a helical segment. Residues Leu-32–Cys-49 are Periplasmic-facing. A disulfide bond links Cys-41 and Cys-44. The chain crosses the membrane as a helical span at residues Ala-50–Pro-65. Residues Phe-66–Phe-71 lie on the Cytoplasmic side of the membrane. The chain crosses the membrane as a helical span at residues Phe-72–Lys-89. Residues Glu-90–Gln-144 lie on the Periplasmic side of the membrane. Cys-104 and Cys-130 are disulfide-bonded. A helical membrane pass occupies residues Trp-145–Ser-163. Over Gln-164–Lys-174 the chain is Cytoplasmic.

The protein belongs to the DsbB family.

Its subcellular location is the cell inner membrane. Required for disulfide bond formation in some periplasmic proteins. Acts by oxidizing the DsbA protein. The sequence is that of Disulfide bond formation protein B from Blochmanniella pennsylvanica (strain BPEN).